A 105-amino-acid polypeptide reads, in one-letter code: Large ribosomal subunit protein bL34m (105 aa).

The transit peptide at 1–16 (MPLFARLCQPQSRRMF) directs the protein to the mitochondrion.

It belongs to the bacterial ribosomal protein bL34 family. In terms of assembly, component of the mitochondrial large ribosomal subunit (mt-LSU). Mature yeast 74S mitochondrial ribosomes consist of a small (37S) and a large (54S) subunit. The 37S small subunit contains a 15S ribosomal RNA (15S mt-rRNA) and 34 different proteins. The 54S large subunit contains a 21S rRNA (21S mt-rRNA) and 46 different proteins.

It is found in the mitochondrion. Component of the mitochondrial ribosome (mitoribosome), a dedicated translation machinery responsible for the synthesis of mitochondrial genome-encoded proteins, including at least some of the essential transmembrane subunits of the mitochondrial respiratory chain. The mitoribosomes are attached to the mitochondrial inner membrane and translation products are cotranslationally integrated into the membrane. The chain is Large ribosomal subunit protein bL34m from Saccharomyces cerevisiae (strain ATCC 204508 / S288c) (Baker's yeast).